We begin with the raw amino-acid sequence, 169 residues long: Large ribosomal subunit protein uL10 (169 aa).

It belongs to the universal ribosomal protein uL10 family. In terms of assembly, part of the ribosomal stalk of the 50S ribosomal subunit. The N-terminus interacts with L11 and the large rRNA to form the base of the stalk. The C-terminus forms an elongated spine to which L12 dimers bind in a sequential fashion forming a multimeric L10(L12)X complex.

Forms part of the ribosomal stalk, playing a central role in the interaction of the ribosome with GTP-bound translation factors. This Rickettsia felis (strain ATCC VR-1525 / URRWXCal2) (Rickettsia azadi) protein is Large ribosomal subunit protein uL10.